We begin with the raw amino-acid sequence, 212 residues long: ATP-dependent dethiobiotin synthetase BioD (212 aa).

13-18 (GIGKTV) lines the ATP pocket. Position 17 (Thr17) interacts with Mg(2+). Lys33 is an active-site residue. A substrate-binding site is contributed by Ser37. Glu100 provides a ligand contact to Mg(2+). ATP is bound by residues 100 to 103 (EGAG) and 184 to 186 (PRL).

This sequence belongs to the dethiobiotin synthetase family. As to quaternary structure, homodimer. Requires Mg(2+) as cofactor.

The protein localises to the cytoplasm. It catalyses the reaction (7R,8S)-7,8-diammoniononanoate + CO2 + ATP = (4R,5S)-dethiobiotin + ADP + phosphate + 3 H(+). It participates in cofactor biosynthesis; biotin biosynthesis; biotin from 7,8-diaminononanoate: step 1/2. Catalyzes a mechanistically unusual reaction, the ATP-dependent insertion of CO2 between the N7 and N8 nitrogen atoms of 7,8-diaminopelargonic acid (DAPA, also called 7,8-diammoniononanoate) to form a ureido ring. The protein is ATP-dependent dethiobiotin synthetase BioD of Agrobacterium fabrum (strain C58 / ATCC 33970) (Agrobacterium tumefaciens (strain C58)).